A 356-amino-acid polypeptide reads, in one-letter code: Calcium/calmodulin-dependent protein kinase type 1 (356 aa).

Positions 2 to 7 (PLFKRR) match the Nuclear localization signal motif. Positions 22 to 278 (YDFRDVLGTG…CQSALEHPWI (257 aa)) constitute a Protein kinase domain. ATP-binding positions include 28 to 36 (LGTGAFSKV) and lysine 52. Aspartate 144 acts as the Proton acceptor in catalysis. Threonine 179 is subject to Phosphothreonine; by ckk-1. Positions 278–318 (ISGNTAYTHDIHRTVAVHLKKSLAKRNWKKAFNAAAAIRQL) are autoinhibitory domain. The tract at residues 298 to 319 (KSLAKRNWKKAFNAAAAIRQLQ) is calmodulin-binding.

The protein belongs to the protein kinase superfamily. CAMK Ser/Thr protein kinase family. CaMK subfamily. Mg(2+) is required as a cofactor.

It is found in the nucleus. It localises to the cytoplasm. It carries out the reaction L-seryl-[protein] + ATP = O-phospho-L-seryl-[protein] + ADP + H(+). The catalysed reaction is L-threonyl-[protein] + ATP = O-phospho-L-threonyl-[protein] + ADP + H(+). With respect to regulation, activated by Ca(2+)/calmodulin. Binding of calmodulin results in a conformational change that generates functional binding sites for both substrate and ATP, and thus relieves autoinhibition and lowers the Km of substrate binding. Must be phosphorylated by ckk-1 to be maximally active but this does not appear to be required for activity in AFD neurons. In terms of biological role, calcium/calmodulin-dependent protein kinase that operates in the calcium-triggered CaMKK-CaMK1 signaling cascade which results in transcriptional activation. Transcriptional activation occurs at least in part through phosphorylation of crh-1. Regulates gene expression, sensory morphology, and function of the AFD thermosensory neurons. Involved in long-term adaptation of AFD neurons to temperatures warmer than the initial acclimatized cultivation temperature. Acts in the FLP thermal nociceptors to moderate the responsiveness to noxious heat and controls neuropeptide release from FLP neurons in response to temperature elevations. Regulates the dauer decision, the decision of the larvae to enter into the alternative stress-resistant and long-lived dauer developmental stage, based on the feeding state, primarily in the AWC sensory neurons. Acts non cell-autonomously in the AWC neurons to regulate expression of the daf-28 insulin-like peptide and cell-autonomously in the ASI sensory neurons to regulate expression of the growth promoting daf-7 in a food-regulated manner. Plays a role in memory-based thermal response of an individual AFD neuron cell. Involved in chemotaxis response in AWC neurons to attractant 2-heptanone, a volatile organic compound emitted by the nematode pathogenic bacterium B.nematocida B16. Represses transcription of glutamate receptor glr-1 in the nucleus basally and in response to change in synaptic activity. The sequence is that of Calcium/calmodulin-dependent protein kinase type 1 (cmk-1) from Caenorhabditis briggsae.